A 668-amino-acid chain; its full sequence is Ras guanine nucleotide exchange factor D (668 aa).

In terms of domain architecture, Rho-GAP spans 27 to 224 (KKLESIFGIA…LMVMDIDEFD (198 aa)). The 126-residue stretch at 237–362 (GESIVKAATF…YFQTFFKPVI (126 aa)) folds into the N-terminal Ras-GEF domain. Positions 433-663 (GSNIIAQQIT…HSISHKLEPR (231 aa)) constitute a Ras-GEF domain.

Promotes the exchange of Ras-bound GDP by GTP. The chain is Ras guanine nucleotide exchange factor D (gefD) from Dictyostelium discoideum (Social amoeba).